Here is a 606-residue protein sequence, read N- to C-terminus: Sodium-independent sulfate anion transporter (606 aa).

Topologically, residues 1–51 (MPSSVTALGQARSSGPGMAPSACCCSPAALQRRLPILAWLPSYSLQWLKMD) are extracellular. The chain crosses the membrane as a helical span at residues 52–72 (FVAGLSVGLTAIPQALAYAEV). Position 73 (Ala-73) is a topological domain, cytoplasmic. Residues 74–94 (GLPPQYGLYSAFMGCFVYFFL) traverse the membrane as a helical segment. Residues 95 to 100 (GTSRDV) lie on the Extracellular side of the membrane. The helical transmembrane segment at 101-117 (TLGPTAIMSLLVSFYTF) threads the bilayer. At 118-119 (HE) the chain is on the cytoplasmic side. The helical transmembrane segment at 120–140 (PAYAVLLAFLSGCIQLAMGVL) threads the bilayer. Residues 141-147 (RLGFLLD) are Extracellular-facing. Residues 148–168 (FISYPVIKGFTSAAAVTIGFG) form a helical membrane-spanning segment. Residues 169–197 (QIKNLLGLQNIPRPFFLQVYHTFLRIAET) lie on the Cytoplasmic side of the membrane. Residues 198-218 (RVGDAVLGLVCMLLLLVLKLM) traverse the membrane as a helical segment. Residues 219 to 250 (RDHVPPVHPEMPPGVRLSRGLVWAATTARNAL) are Extracellular-facing. A helical membrane pass occupies residues 251 to 271 (VVSFAALVAYSFEVTGYQPFI). Over 272 to 307 (LTGETAEGLPPVRIPPFSVTTANGTISFTEMVQDMG) the chain is Cytoplasmic. Residues 308 to 328 (AGLAVVPLMGLLESIAVAKAF) form a helical membrane-spanning segment. Residues 329–341 (ASQNNYRIDANQE) lie on the Extracellular side of the membrane. The helical transmembrane segment at 342–362 (LLAIGLTNMLGSLVSSYPVTG) threads the bilayer. Over 363–374 (SFGRTAVNAQSG) the chain is Cytoplasmic. The helical transmembrane segment at 375 to 395 (VCTPAGGLVTGVLVLLSLDYL) threads the bilayer. Residues 396 to 398 (TSL) lie on the Extracellular side of the membrane. The chain crosses the membrane as a helical span at residues 399–419 (FYYIPKSALAAVIIMAVAPLF). The Cytoplasmic portion of the chain corresponds to 420 to 441 (DTKIFRTLWRVKRLDLLPLCVT). The chain crosses the membrane as a helical span at residues 442–462 (FLLCFWEVQYGILAGALVSLL). Over 463–606 (MLLHSAARPE…LDQKVALLKA (144 aa)) the chain is Extracellular. Positions 470 to 584 (RPETKVSEGP…EAEKHLRQEP (115 aa)) constitute an STAS domain.

The protein belongs to the SLC26A/SulP transporter (TC 2.A.53) family. In terms of tissue distribution, detected in all tissues tested with highest expression observed in brain, kidney, HEVEC and placenta and lowest in pancreas, skeletal muscle, liver, lung and heart.

The protein localises to the cell membrane. The protein resides in the lysosome membrane. It localises to the apical cell membrane. Its subcellular location is the basolateral cell membrane. The enzyme catalyses hydrogencarbonate(in) + chloride(out) = hydrogencarbonate(out) + chloride(in). The catalysed reaction is sulfate(in) + H(+)(in) = sulfate(out) + H(+)(out). It catalyses the reaction oxalate(in) + chloride(out) = oxalate(out) + chloride(in). Functionally, sodium-independent anion exchanger mediating bicarbonate, chloride, sulfate and oxalate transport. Exhibits sodium-independent sulfate anion transporter activity that may cooperate with SLC26A2 to mediate DIDS-sensitive sulfate uptake into high endothelial venules endothelial cells (HEVEC). In the kidney, mediates chloride-bicarbonate exchange, facilitating V-ATPase-mediated acid secretion. May function as a chloride channel, playing an important role in moderating chloride homeostasis and neuronal activity in the cerebellum. The chain is Sodium-independent sulfate anion transporter from Homo sapiens (Human).